Here is a 145-residue protein sequence, read N- to C-terminus: MKKITLIGSELAKTGNEFIYLGPLEECEPCRFKRICHNNLDVGTRYKIVSVRSANHPCTVHENGVKVVEVMPAEFTIIIESKKALEGVTLTHSDVHCDRVCCENYLSCHPEGISGKYRVSSILPEKVECKKGNSLKKISIIPVQQ.

Belongs to the UPF0179 family.

This Methanococcus maripaludis (strain C6 / ATCC BAA-1332) protein is UPF0179 protein MmarC6_0993.